The sequence spans 308 residues: Putative mitochondrial transporter UCP3 (308 aa).

The Mitochondrial intermembrane segment spans residues M1 to P10. The helical transmembrane segment at P11–F32 threads the bilayer. Solcar repeat units follow at residues P11–L102, S111–K202, and D211–A296. The Mitochondrial matrix segment spans residues P33–S73. A helical membrane pass occupies residues P74–Y96. Over D97–R116 the chain is Mitochondrial intermembrane. Residues I117–P133 traverse the membrane as a helical segment. Topologically, residues T134–L179 are mitochondrial matrix. Residues P180–Y196 form a helical membrane-spanning segment. Topologically, residues D197–L213 are mitochondrial intermembrane. A helical membrane pass occupies residues P214–P233. At V234 to A267 the chain is on the mitochondrial matrix side. Residues F268–Y290 form a helical membrane-spanning segment. The tract at residues S275–L297 is purine nucleotide binding. Residues E291–F308 lie on the Mitochondrial intermembrane side of the membrane.

It belongs to the mitochondrial carrier (TC 2.A.29) family. As to quaternary structure, interacts with HAX1; the interaction is direct and calcium-dependent.

The protein localises to the mitochondrion inner membrane. In terms of biological role, putative transmembrane transporter that plays a role in mitochondrial metabolism via an as yet unclear mechanism. Originally, this mitochondrial protein was thought to act as a proton transmembrane transporter from the mitochondrial intermembrane space into the matrix, causing proton leaks through the inner mitochondrial membrane, thereby uncoupling mitochondrial membrane potential generation from ATP synthesis. However, this function is controversial and uncoupling may not be the function, or at least not the main function, but rather a consequence of more conventional metabolite transporter activity. This chain is Putative mitochondrial transporter UCP3, found in Sus scrofa (Pig).